A 135-amino-acid polypeptide reads, in one-letter code: C-type Lectin CRL (135 aa).

Cystine bridges form between cysteine 3–cysteine 14, cysteine 31–cysteine 131, cysteine 38–cysteine 133, and cysteine 106–cysteine 123. The C-type lectin domain occupies 10-132 (MNGLCYKIFN…CESKDAFLCQ (123 aa)). Positions 96, 98, 104, 119, and 120 each coordinate Ca(2+). The Galactose-binding motif lies at 96-98 (QPD).

It belongs to the true venom lectin family. Homodimer; disulfide-linked. Expressed by the venom gland.

The protein localises to the secreted. Functionally, beta-galactoside and N-acetylgalactosamine (GalNAc) specific C-type lectin. This chain is C-type Lectin CRL, found in Crotalus ruber ruber (Red diamond rattlesnake).